Consider the following 900-residue polypeptide: Translation initiation factor IF-2 (900 aa).

A disordered region spans residues 48–310; that stretch reads HLNRDRGNAP…KPSSLQQSFN (263 aa). Residues 68-82 are compositionally biased toward polar residues; the sequence is STLNVPSTGGKSKSV. Composition is skewed to basic and acidic residues over residues 85-98 and 108-164; these read EVRK…RDPI and QARR…KEKV. Polar residues predominate over residues 165–176; the sequence is TNQQNENMTKPA. A compositionally biased stretch (basic and acidic residues) spans 177-237; that stretch reads QSEKAKREAE…SATKPEESAD (61 aa). Residues 263-277 are compositionally biased toward basic residues; it reads TRTRAAKVTKQKKGN. Residues 278-291 are compositionally biased toward basic and acidic residues; it reads RQSESKADREEARA. Positions 399–568 constitute a tr-type G domain; that stretch reads FRAPVVTIMG…LLQAEVLELK (170 aa). The tract at residues 408 to 415 is G1; the sequence is GHVDHGKT. Residue 408–415 participates in GTP binding; that stretch reads GHVDHGKT. Positions 433–437 are G2; that stretch reads GITQH. The tract at residues 454-457 is G3; it reads DTPG. GTP is bound by residues 454-458 and 508-511; these read DTPGH and NKID. Positions 508–511 are G4; it reads NKID. The interval 544–546 is G5; that stretch reads SAK.

It belongs to the TRAFAC class translation factor GTPase superfamily. Classic translation factor GTPase family. IF-2 subfamily.

Its subcellular location is the cytoplasm. In terms of biological role, one of the essential components for the initiation of protein synthesis. Protects formylmethionyl-tRNA from spontaneous hydrolysis and promotes its binding to the 30S ribosomal subunits. Also involved in the hydrolysis of GTP during the formation of the 70S ribosomal complex. This chain is Translation initiation factor IF-2, found in Pectobacterium atrosepticum (strain SCRI 1043 / ATCC BAA-672) (Erwinia carotovora subsp. atroseptica).